Here is a 524-residue protein sequence, read N- to C-terminus: Capsid scaffolding protein (524 aa).

Residues His47, Ser116, and His137 each act as charge relay system in the active site. The interval 268–287 is interaction with pAP; sequence DDLIPVPRSAFLNMLESTVS. The Nuclear localization signal signature appears at 359–365; the sequence is RPRKRAR. Residues 359 to 378 are disordered; it reads RPRKRAREDPEDEVSFPGEE. The interaction with major capsid protein stretch occupies residues 504–524; that stretch reads AETSKAATLQKLFCDEMLSKQ.

This sequence belongs to the herpesviridae capsid scaffolding protein family. Homomultimer. Interacts with major capsid protein. In terms of assembly, exists in a monomer-dimer equilibrium with the dimer being the active species. Post-translationally, capsid scaffolding protein is cleaved by assemblin after formation of the spherical procapsid. As a result, the capsid obtains its mature, icosahedral shape. Cleavages occur at two or more sites: release (R-site) and maturation (M-site).

The protein resides in the host cytoplasm. It is found in the host nucleus. The catalysed reaction is Cleaves -Ala-|-Ser- and -Ala-|-Ala- bonds in the scaffold protein.. Functionally, acts as a scaffold protein by binding major capsid protein in the cytoplasm, inducing the nuclear localization of both proteins. Multimerizes in the nucleus such as major capsid protein forms the icosahedral T=16 capsid. Autocatalytic cleavage releases the assembly protein, and subsequently abolishes interaction with major capsid protein. Cleavages products are evicted from the capsid before or during DNA packaging. Its function is as follows. Protease that plays an essential role in virion assembly within the nucleus. Catalyzes the cleavage of the assembly protein after formation of the spherical procapsid. By that cleavage, the capsid matures and gains its icosahedral shape. The cleavage sites seem to include -Ala-Ser-, -Ala-Ala-, as well as Ala-Thr bonds. Assemblin and cleavages products are evicted from the capsid before or during DNA packaging. In terms of biological role, plays a major role in capsid assembly. Acts as a scaffold protein by binding major capsid protein. Multimerizes in the nucleus such as major capsid protein forms the icosahedral T=16 capsid. Cleaved by assemblin after capsid completion. The cleavages products are evicted from the capsid before or during DNA packaging. This is Capsid scaffolding protein (17) from Connochaetes taurinus (Blue wildebeest).